We begin with the raw amino-acid sequence, 605 residues long: Alpha-amylase (605 aa).

The signal sequence occupies residues 1–33 (MGVRRSLAALLAALLGCATSLVALTVAASPAHA). Ca(2+) contacts are provided by Asn130 and Asp189. The active-site Nucleophile is Asp219. His223 serves as a coordination point for Ca(2+). Glu253 acts as the Proton donor in catalysis. The CBM20 domain maps to 500–605 (GDDCTTVTAR…CSQNFYDSWR (106 aa)).

Belongs to the glycosyl hydrolase 13 family. Monomer. Ca(2+) is required as a cofactor.

It catalyses the reaction Endohydrolysis of (1-&gt;4)-alpha-D-glucosidic linkages in polysaccharides containing three or more (1-&gt;4)-alpha-linked D-glucose units.. In Thermomonospora curvata, this protein is Alpha-amylase (tam).